A 126-amino-acid chain; its full sequence is Class I hydrophobin 1 (126 aa).

The first 16 residues, 1–16 (MQYMTIVAFLAATVAA), serve as a signal peptide directing secretion. 4 disulfides stabilise this stretch: Cys38/Cys100, Cys46/Cys94, Cys47/Cys75, and Cys101/Cys119.

This sequence belongs to the fungal hydrophobin family.

The protein localises to the secreted. Its subcellular location is the cell wall. In terms of biological role, aerial growth, conidiation, and dispersal of filamentous fungi in the environment rely upon a capability of their secreting small amphipathic proteins called hydrophobins (HPBs) with low sequence identity. Class I can self-assemble into an outermost layer of rodlet bundles on aerial cell surfaces, conferring cellular hydrophobicity that supports fungal growth, development and dispersal; whereas Class II form highly ordered films at water-air interfaces through intermolecular interactions but contribute nothing to the rodlet structure. HYD1 and HYD2 are required for the structural integrity of the long aerial chains of microconidia. Does not seem to be important for the ability to cause seedling disease. This is Class I hydrophobin 1 from Gibberella moniliformis (Maize ear and stalk rot fungus).